Consider the following 314-residue polypeptide: DNA-directed RNA polymerase subunit alpha (314 aa).

Residues 1–227 (MIEFQKPTIS…EHLALFIDLS (227 aa)) are alpha N-terminal domain (alpha-NTD). Residues 241 to 314 (VETVMENKEP…GQSFKQETEN (74 aa)) are alpha C-terminal domain (alpha-CTD).

The protein belongs to the RNA polymerase alpha chain family. In terms of assembly, homodimer. The RNAP catalytic core consists of 2 alpha, 1 beta, 1 beta' and 1 omega subunit. When a sigma factor is associated with the core the holoenzyme is formed, which can initiate transcription.

The catalysed reaction is RNA(n) + a ribonucleoside 5'-triphosphate = RNA(n+1) + diphosphate. In terms of biological role, DNA-dependent RNA polymerase catalyzes the transcription of DNA into RNA using the four ribonucleoside triphosphates as substrates. This is DNA-directed RNA polymerase subunit alpha from Oenococcus oeni (strain ATCC BAA-331 / PSU-1).